A 23-amino-acid polypeptide reads, in one-letter code: Potassium channel toxin kappa-KTx 1.3 (23 aa).

2 disulfides stabilise this stretch: Cys4–Cys22 and Cys8–Cys18.

It belongs to the short scorpion toxin superfamily. Potassium channel inhibitor kappa-KTx family. Kappa-KTx 1 subfamily. As to quaternary structure, monomer. Post-translationally, is not amidated. As to expression, expressed by the venom gland.

Its subcellular location is the secreted. Shows very weak blocking activity on voltage-gated potassium channels Kv10.1/KCNH1/EAG1 (6.2% inhibition by 40 uM of the toxin). Has no effect on the other voltage-gated potassium channels tested. This is Potassium channel toxin kappa-KTx 1.3 from Heterometrus spinifer (Asia giant forest scorpion).